The chain runs to 527 residues: Zinc finger imprinted 2 (527 aa).

Acidic residues predominate over residues 1–16; the sequence is MYQPEDDNNSDVTSDD. The interval 1–104 is disordered; the sequence is MYQPEDDNNS…SRSQDAESYQ (104 aa). 3 stretches are compositionally biased toward basic and acidic residues: residues 17-26, 35-56, and 80-99; these read DMTRNRRESS, SGDRDWDRRGRSRDMEPRDRWS, and FEMDREDDRDSRAYESRSQD. One can recognise a KRAB domain in the interval 176-246; sequence VTFEDVLVDF…ETDSRHTVIC (71 aa). A disordered region spans residues 247 to 322; the sequence is QGESHDDPLE…GICTSPQSAS (76 aa). Residues 259–275 show a composition bias toward polar residues; sequence QGNQEKLLTPITMNDPK. Residues 297-307 show a composition bias toward basic and acidic residues; that stretch reads QSKDPLGKDPQ. 5 C2H2-type zinc fingers span residues 328 to 350, 356 to 378, 412 to 434, 466 to 488, and 494 to 516; these read NRCEFCKRTFSTQVALRRHERIH, YECKQCAEAFYLMPHLNRHQKTH, FECFQCGKAFLQNVHLLQHLKAH, CQCCDCGRVFSRNSYLIQHYRTH, and YQCQLCGKCFGRPSYLTQHYQLH.

Belongs to the krueppel C2H2-type zinc-finger protein family. Highest levels of expression in adult testis; modest levels in fetal kidney and brain.

Its subcellular location is the nucleus. Functionally, may be involved in transcriptional regulation. The protein is Zinc finger imprinted 2 (ZIM2) of Homo sapiens (Human).